The following is a 472-amino-acid chain: MSNMEHDRWSRVKGRLRSSVGEDVYSSWFARMDLEAVQPESVHLSVPTRFLKSWIQTHYSDKVLTCWQAELPEVCRIDLTVRSPMRAAVAKEAAAPVEHRRAEHRPATETRSHATVPASSNHDALGGSPLDPRLTFASFVVGRSNTLAHAAAKQVAEGRRGDPVMFNPLYIHSGVGLGKTHLLQAVTWAGNTGIERKVLYLTAEKFMYGFVAALKTQTSLAFKEALRGIDVLVIDDLQFLQGKTTQAEFCHTLNALIDAGRQVVVAADRPPSDLESLDERVRSRLAGGLVVEMAPLGEDLRLGILKSRVVAARAHHASFDVPAPVLEYLARAITHNGRDLEGAINRLLAHSKLNAQPVTLEMAEHEVRDLIRPQEPKRIKIEDIQRIVARQYNVSRSDLLSSRRTANVVRPRQVAMYLAKTLTLRSLPEIGRRFGGRDHTTVLHAVRKIEGLVSKDTTLSDEVDSLKRQLQE.

The domain I, interacts with DnaA modulators stretch occupies residues 1-73; that stretch reads MSNMEHDRWS…LTCWQAELPE (73 aa). The tract at residues 73–128 is domain II; sequence EVCRIDLTVRSPMRAAVAKEAAAPVEHRRAEHRPATETRSHATVPASSNHDALGGS. The tract at residues 92-127 is disordered; sequence EAAAPVEHRRAEHRPATETRSHATVPASSNHDALGG. A compositionally biased stretch (basic and acidic residues) spans 97 to 112; that stretch reads VEHRRAEHRPATETRS. Residues 129 to 351 form a domain III, AAA+ region region; the sequence is PLDPRLTFAS…GAINRLLAHS (223 aa). Glycine 176, glycine 178, lysine 179, and threonine 180 together coordinate ATP. The tract at residues 352 to 472 is domain IV, binds dsDNA; that stretch reads KLNAQPVTLE…VDSLKRQLQE (121 aa).

It belongs to the DnaA family. As to quaternary structure, oligomerizes as a right-handed, spiral filament on DNA at oriC.

The protein localises to the cytoplasm. In terms of biological role, plays an essential role in the initiation and regulation of chromosomal replication. ATP-DnaA binds to the origin of replication (oriC) to initiate formation of the DNA replication initiation complex once per cell cycle. Binds the DnaA box (a 9 base pair repeat at the origin) and separates the double-stranded (ds)DNA. Forms a right-handed helical filament on oriC DNA; dsDNA binds to the exterior of the filament while single-stranded (ss)DNA is stabiized in the filament's interior. The ATP-DnaA-oriC complex binds and stabilizes one strand of the AT-rich DNA unwinding element (DUE), permitting loading of DNA polymerase. After initiation quickly degrades to an ADP-DnaA complex that is not apt for DNA replication. Binds acidic phospholipids. This Rhodopseudomonas palustris (strain HaA2) protein is Chromosomal replication initiator protein DnaA.